The following is a 478-amino-acid chain: Mannose-1-phosphate guanylyltransferase (478 aa).

The protein belongs to the mannose-6-phosphate isomerase type 2 family.

The catalysed reaction is alpha-D-mannose 1-phosphate + GTP + H(+) = GDP-alpha-D-mannose + diphosphate. It functions in the pathway nucleotide-sugar biosynthesis; GDP-alpha-D-mannose biosynthesis; GDP-alpha-D-mannose from alpha-D-mannose 1-phosphate (GTP route): step 1/1. Its function is as follows. Involved in the biosynthesis of the capsular polysaccharide colanic acid. This Escherichia coli (strain K12) protein is Mannose-1-phosphate guanylyltransferase (manC).